The chain runs to 251 residues: Hydroxyacylglutathione hydrolase (251 aa).

The Zn(2+) site is built by histidine 53, histidine 55, aspartate 57, histidine 58, histidine 110, aspartate 127, and histidine 165.

Belongs to the metallo-beta-lactamase superfamily. Glyoxalase II family. In terms of assembly, monomer. Zn(2+) is required as a cofactor.

It carries out the reaction an S-(2-hydroxyacyl)glutathione + H2O = a 2-hydroxy carboxylate + glutathione + H(+). It functions in the pathway secondary metabolite metabolism; methylglyoxal degradation; (R)-lactate from methylglyoxal: step 2/2. Its function is as follows. Thiolesterase that catalyzes the hydrolysis of S-D-lactoyl-glutathione to form glutathione and D-lactic acid. This is Hydroxyacylglutathione hydrolase from Salmonella arizonae (strain ATCC BAA-731 / CDC346-86 / RSK2980).